Consider the following 288-residue polypeptide: Polyprenyl transferase eriF (288 aa).

Transmembrane regions (helical) follow at residues 24–44, 51–71, 101–121, 145–165, 215–235, and 268–288; these read ASII…TLPL, YIFL…LNQV, IAAF…LPET, CIAM…AISP, FIIT…GGIF, and FYTY…HGLI.

The protein belongs to the UbiA prenyltransferase family. It depends on Mg(2+) as a cofactor.

It is found in the membrane. In terms of biological role, polyprenyl transferase; part of the gene cluster that mediates the biosynthesis of erinacines, cyathane-xylosides that show unique biological activities, including leishmanicidal activity, stimulating activity for nerve growth-factor synthesis, and agonistic activity toward the kappa opioid receptor. The role of eriF within the pathway has still to be determined. The first step of the erinacines biosynthesis pathway is catalyzed by the geranylgeranyl diphosphate (GGPP) synthase eriE via conversion of farnesyl pyrophosphate and isopentyl pyrophosphate into geranylgeranyl pyrophosphate (GGPP). GGPP is then substrate of the diterpene cyclase eriG for the production of cyatha-3,12-diene. The cytochrome P450 monooxygenase eriI then hydroxylates cyatha-3,12-diene at C-14 of the seven-membered ring to produce erinacol, which is further hydroxylated at C-15 by the cytochrome P450 monooxygenase eriC to yield cyathadiol. The cytochrome P450 monooxygenase eriA then catalyzes C-11 hydroxylation in the presence of the short chain dehydrogenase/reductase (SDR) eriH, which leads to the production of cyathatriol. The acetyltransferase eriL converts cyathatriol into 11-O-acetyl-cyathatriol. The SDR eriH catalyzes further oxidation of 11-O-acetyl-cyathatriol into 1-O-acetylcyathin A3. Finally, the glycosyl transferase eriJ tranfers xylose from UDP-xylose onto C-14 of 11-O-acetyl-cyathatriol to form eracine Q. EriJ is also able to convert 11-O-acetyl-cyathatriol to eracine Q2 by using UDP-D-glucose as cosubstrate, but at a lower rate. This chain is Polyprenyl transferase eriF, found in Hericium erinaceus (Lion's mane mushroom).